Reading from the N-terminus, the 65-residue chain is Toxin Cbi1 (65 aa).

The LCN-type CS-alpha/beta domain occupies 1–64 (KDGYPMDNKG…VWDRATNKCR (64 aa)). 4 cysteine pairs are disulfide-bonded: C11/C63, C15/C37, C22/C44, and C26/C46.

Belongs to the long (4 C-C) scorpion toxin superfamily. Sodium channel inhibitor family. Beta subfamily. As to expression, expressed by the venom gland.

The protein localises to the secreted. Its function is as follows. Beta toxins bind voltage-independently at site-4 of sodium channels (Nav) and shift the voltage of activation toward more negative potentials thereby affecting sodium channel activation and promoting spontaneous and repetitive firing. This chain is Toxin Cbi1, found in Centruroides bicolor (Scorpion).